Here is a 504-residue protein sequence, read N- to C-terminus: MSFSVDVLANIAIELQRGIGHQDRFQRLITTLRQVLECDASALLRYDSRQFIPLAIDGLAKDVLGRRFALEGHPRLEAIARAGDVVRFPADSELPDPYDGLIPGQESLKVHACVGLPLFAGQNLIGALTLDGMQPDQFDVFSDEELRLIAALAAGALSNALLIEQLESQNMMPGDATPFEAVKQTQMIGLSPGMTQLKKEIEIVAASDLNVLISGETGTGKELVAKAIHEASPRAVNPLVYLNCAALPESVAESELFGHVKGAFTGAISNRSGKFEMADNGTLFLDEIGELSLALQAKLLRVLQYGDIQRVGDDRSLRVDVRVLAATNRDLREEVLAGRFRADLFHRLSVFPLSVPPLRERGDDVILLAGYFCEQCRLRLGLSRVVLSAGARNLLQHYRFPGNVRELEHAIHRAVVLARATRNGDEVILEAQHFAFPEVTLPPPEAAAVPVVKQNLREATEAFQRETIRQALAQNHHNWAACARMLETDVANLHRLAKRLGMKD.

A 4-aspartylphosphate modification is found at Asp57. Residues 187 to 416 (MIGLSPGMTQ…LEHAIHRAVV (230 aa)) form the Sigma-54 factor interaction domain. Residues 215–222 (GETGTGKE) and 278–287 (ADNGTLFLDE) each bind ATP. Residues 479–498 (WAACARMLETDVANLHRLAK) constitute a DNA-binding region (H-T-H motif).

It participates in nitrogen metabolism; nitric oxide reduction. Required for the expression of anaerobic nitric oxide (NO) reductase, acts as a transcriptional activator for at least the norVW operon. Activation also requires sigma-54. The chain is Anaerobic nitric oxide reductase transcription regulator NorR from Escherichia coli (strain ATCC 8739 / DSM 1576 / NBRC 3972 / NCIMB 8545 / WDCM 00012 / Crooks).